The sequence spans 391 residues: Argininosuccinate synthase (391 aa).

6–14 contributes to the ATP binding site; sequence AYSGGLDTT. Residue tyrosine 84 participates in L-citrulline binding. Glycine 114 is a binding site for ATP. Threonine 116, asparagine 120, and aspartate 121 together coordinate L-aspartate. Asparagine 120 is an L-citrulline binding site. Positions 124, 171, 180, 253, and 265 each coordinate L-citrulline.

Belongs to the argininosuccinate synthase family. Type 1 subfamily. Homotetramer.

It localises to the cytoplasm. It carries out the reaction L-citrulline + L-aspartate + ATP = 2-(N(omega)-L-arginino)succinate + AMP + diphosphate + H(+). It participates in amino-acid biosynthesis; L-arginine biosynthesis; L-arginine from L-ornithine and carbamoyl phosphate: step 2/3. The polypeptide is Argininosuccinate synthase (Metallosphaera sedula (strain ATCC 51363 / DSM 5348 / JCM 9185 / NBRC 15509 / TH2)).